The primary structure comprises 505 residues: Acetylcholine receptor subunit beta (505 aa).

A signal peptide spans 1-24 (MTPGALLLLLLGVLGAHLAPGARG). The Extracellular segment spans residues 25–245 (SEAEGRLREK…VTFYLIIRRK (221 aa)). A disulfide bond links C152 and C166. N165 carries N-linked (GlcNAc...) asparagine glycosylation. 3 consecutive transmembrane segments (helical) span residues 246-270 (PLFYLVNVIAPCILITLLAIFVFYL), 278-295 (MGLSIFALLTLTVFLLLL), and 312-333 (YLMFTMVLVTFSVILSVVVLNL). The Cytoplasmic portion of the chain corresponds to 334-473 (HHRSPHTHQM…WQFVAMVVDR (140 aa)). The tract at residues 365–391 (KPERDQMQEPPSIAPRDSPGSGWGRGT) is disordered. Y394 carries the post-translational modification Phosphotyrosine; by Tyr-kinases. The chain crosses the membrane as a helical span at residues 474-492 (LFLWTFIIFTSVGTLVIFL).

Belongs to the ligand-gated ion channel (TC 1.A.9) family. Acetylcholine receptor (TC 1.A.9.1) subfamily. Beta-1/CHRNB1 sub-subfamily. Pentamer of two alpha chains, and one each of the beta, delta, and gamma (in immature muscle) or epsilon (in mature muscle) chains. The muscle heteropentamer composed of alpha-1, beta-1, delta, epsilon subunits interacts with the alpha-conotoxin ImII.

It localises to the postsynaptic cell membrane. The protein localises to the cell membrane. The enzyme catalyses K(+)(in) = K(+)(out). It carries out the reaction Na(+)(in) = Na(+)(out). Functionally, after binding acetylcholine, the AChR responds by an extensive change in conformation that affects all subunits and leads to opening of an ion-conducting channel across the plasma membrane. In Bos taurus (Bovine), this protein is Acetylcholine receptor subunit beta (CHRNB1).